Consider the following 354-residue polypeptide: UDP-N-acetylglucosamine--N-acetylmuramyl-(pentapeptide) pyrophosphoryl-undecaprenol N-acetylglucosamine transferase (354 aa).

UDP-N-acetyl-alpha-D-glucosamine contacts are provided by residues 15–17 (TGG), Asn-127, Arg-163, Ser-191, Ile-244, 263–268 (ALTVSE), and Gln-288.

This sequence belongs to the glycosyltransferase 28 family. MurG subfamily.

It is found in the cell inner membrane. It catalyses the reaction di-trans,octa-cis-undecaprenyl diphospho-N-acetyl-alpha-D-muramoyl-L-alanyl-D-glutamyl-meso-2,6-diaminopimeloyl-D-alanyl-D-alanine + UDP-N-acetyl-alpha-D-glucosamine = di-trans,octa-cis-undecaprenyl diphospho-[N-acetyl-alpha-D-glucosaminyl-(1-&gt;4)]-N-acetyl-alpha-D-muramoyl-L-alanyl-D-glutamyl-meso-2,6-diaminopimeloyl-D-alanyl-D-alanine + UDP + H(+). It functions in the pathway cell wall biogenesis; peptidoglycan biosynthesis. Cell wall formation. Catalyzes the transfer of a GlcNAc subunit on undecaprenyl-pyrophosphoryl-MurNAc-pentapeptide (lipid intermediate I) to form undecaprenyl-pyrophosphoryl-MurNAc-(pentapeptide)GlcNAc (lipid intermediate II). This chain is UDP-N-acetylglucosamine--N-acetylmuramyl-(pentapeptide) pyrophosphoryl-undecaprenol N-acetylglucosamine transferase, found in Vibrio cholerae serotype O1 (strain ATCC 39541 / Classical Ogawa 395 / O395).